We begin with the raw amino-acid sequence, 204 residues long: Glycerol-3-phosphate acyltransferase (204 aa).

The next 5 helical transmembrane spans lie at 8–28 (ILIFAYLLGSINSAIIVCYIF), 53–73 (VPAAITLIFDILKGLVPVVIA), 81–101 (FITACTALYAILGHIFPIFFG), 116–136 (FGFSWILGLIFVITWLCVAII), and 155–175 (VIFTSDLQVAAPFLIIAIIIL).

The protein belongs to the PlsY family. As to quaternary structure, probably interacts with PlsX.

The protein resides in the cell inner membrane. The catalysed reaction is an acyl phosphate + sn-glycerol 3-phosphate = a 1-acyl-sn-glycero-3-phosphate + phosphate. Its pathway is lipid metabolism; phospholipid metabolism. In terms of biological role, catalyzes the transfer of an acyl group from acyl-phosphate (acyl-PO(4)) to glycerol-3-phosphate (G3P) to form lysophosphatidic acid (LPA). This enzyme utilizes acyl-phosphate as fatty acyl donor, but not acyl-CoA or acyl-ACP. This Francisella tularensis subsp. novicida (strain U112) protein is Glycerol-3-phosphate acyltransferase.